The following is a 133-amino-acid chain: Large ribosomal subunit protein bL19 (133 aa).

Belongs to the bacterial ribosomal protein bL19 family.

In terms of biological role, this protein is located at the 30S-50S ribosomal subunit interface and may play a role in the structure and function of the aminoacyl-tRNA binding site. This Stenotrophomonas maltophilia (strain R551-3) protein is Large ribosomal subunit protein bL19.